The sequence spans 290 residues: Virginiamycin B lyase (290 aa).

Residue H226 coordinates substrate. Mg(2+) is bound at residue E265. H267 serves as the catalytic Proton acceptor. Position 282 (E282) interacts with Mg(2+).

It belongs to the Vgb family. Monomer. It depends on Mg(2+) as a cofactor.

In terms of biological role, inactivates the type B streptogramin antibiotics by linearizing the lactone ring at the ester linkage, generating a free phenylglycine carboxylate and converting the threonyl moiety into 2-amino-butenoic acid. In Mycolicibacterium vanbaalenii (strain DSM 7251 / JCM 13017 / BCRC 16820 / KCTC 9966 / NRRL B-24157 / PYR-1) (Mycobacterium vanbaalenii), this protein is Virginiamycin B lyase.